Here is a 113-residue protein sequence, read N- to C-terminus: Mitochondrial import inner membrane translocase subunit tim16 (113 aa).

The segment at K56–K108 is J-like.

The protein belongs to the TIM16/PAM16 family. In terms of assembly, probable component of the PAM complex at least composed of a mitochondrial HSP70 protein, grepE, tim16 and tim14. Associates with the TIM23 complex.

It localises to the mitochondrion inner membrane. Its function is as follows. Regulates ATP-dependent protein translocation into the mitochondrial matrix. In Dictyostelium discoideum (Social amoeba), this protein is Mitochondrial import inner membrane translocase subunit tim16 (timm16).